A 282-amino-acid chain; its full sequence is Transmembrane protein 41B (282 aa).

Residues Met-1 to Pro-36 form a disordered region. The next 6 membrane-spanning stretches (helical) occupy residues Met-43–Phe-63, Thr-102–Gly-122, Leu-138–Leu-160, Leu-188–Ile-208, Pro-216–Ile-236, and Ala-251–Val-271. The segment at Gly-131–Leu-242 is VTT domain; required for its function in autophagy.

Belongs to the TMEM41 family.

It localises to the endoplasmic reticulum membrane. The protein localises to the endomembrane system. It catalyses the reaction a 1,2-diacyl-sn-glycero-3-phospho-L-serine(in) = a 1,2-diacyl-sn-glycero-3-phospho-L-serine(out). The catalysed reaction is cholesterol(in) = cholesterol(out). It carries out the reaction a 1,2-diacyl-sn-glycero-3-phosphocholine(in) = a 1,2-diacyl-sn-glycero-3-phosphocholine(out). The enzyme catalyses a 1,2-diacyl-sn-glycero-3-phosphoethanolamine(in) = a 1,2-diacyl-sn-glycero-3-phosphoethanolamine(out). In terms of biological role, phospholipid scramblase involved in lipid homeostasis and membrane dynamics processes. Has phospholipid scramblase activity toward cholesterol and phosphatidylserine, as well as phosphatidylethanolamine and phosphatidylcholine. Required for autophagosome formation: participates in early stages of autophagosome biogenesis at the endoplasmic reticulum (ER) membrane by reequilibrating the leaflets of the ER as lipids are extracted by atg2 (atg2a or atg2b) to mediate autophagosome assembly. In addition to autophagy, involved in other processes in which phospholipid scramblase activity is required. Required for normal motor neuron development. This chain is Transmembrane protein 41B, found in Danio rerio (Zebrafish).